A 630-amino-acid chain; its full sequence is A-type voltage-gated potassium channel KCND2 (630 aa).

Topologically, residues 1–184 are cytoplasmic; it reads MAAGVAAWLP…FENPHTSTMA (184 aa). An interaction with KCNIP1, KCNIP2, and other family members region spans residues 2 to 20; it reads AAGVAAWLPFARAAAIGWM. At Thr-38 the chain carries Phosphothreonine. The tract at residues 71-90 is interaction with KCNIP1; sequence ERDFFYHPETQQYFFDRDPD. Positions 105, 111, 132, and 133 each coordinate Zn(2+). A helical transmembrane segment spans residues 185–206; the sequence is LVFYYVTGFFIAVSVIANVVET. Over 207–226 the chain is Extracellular; that stretch reads VPCGSSPGHIKELPCGERYA. The chain crosses the membrane as a helical span at residues 227–249; that stretch reads VAFFCLDTACVMIFTVEYLLRLA. Over 250–256 the chain is Cytoplasmic; it reads AAPSRYR. Residues 257 to 281 form a helical membrane-spanning segment; that stretch reads FVRSVMSIIDVVAILPYYIGLVMTD. Topologically, residues 282–287 are extracellular; it reads NEDVSG. A helical; Voltage-sensor membrane pass occupies residues 288–307; sequence AFVTLRVFRVFRIFKFSRHS. At 308–321 the chain is on the cytoplasmic side; sequence QGLRILGYTLKSCA. Residues 308 to 321 form an S4-S5 linker region; sequence QGLRILGYTLKSCA. The chain crosses the membrane as a helical span at residues 322–345; the sequence is SELGFLLFSLTMAIIIFATVMFYA. At 346 to 357 the chain is on the extracellular side; sequence EKGSSASKFTSI. An intramembrane region (helical) is located at residues 358 to 369; sequence PAAFWYTIVTMT. 4 residues coordinate K(+): Thr-370, Leu-371, Gly-372, and Tyr-373. The Selectivity filter signature appears at 370 to 375; that stretch reads TLGYGD. Residues 370 to 377 lie within the membrane without spanning it; it reads TLGYGDMV. Topologically, residues 378–380 are extracellular; that stretch reads PKT. A helical transmembrane segment spans residues 381–403; that stretch reads IAGKIFGSICSLSGVLVIALPVP. At 404 to 630 the chain is on the cytoplasmic side; sequence VIVSNFSRIY…GGNIVRVSAL (227 aa). Phosphoserine is present on Ser-438. Residues 474–489 form a required for dendritic targeting region; the sequence is FETQHHHLLHCLEKTT. The tract at residues 474-630 is important for normal channel activation and inactivation, for interaction with KCNIP2, and probably other family members as well; the sequence is FETQHHHLLH…GGNIVRVSAL (157 aa). Residues Ser-548, Ser-552, Ser-572, and Ser-575 each carry the phosphoserine modification. A disordered region spans residues 600-630; it reads IPTPPVTTPEGDDRPESPEYSGGNIVRVSAL. Phosphothreonine occurs at positions 602 and 607. Phosphoserine is present on Ser-616. Residues 627–630 carry the PDZ-binding motif; that stretch reads VSAL.

Belongs to the potassium channel family. D (Shal) (TC 1.A.1.2) subfamily. Kv4.2/KCND2 sub-subfamily. As to quaternary structure, homotetramer or heterotetramer with KCND1 or KCND3. Associates with the regulatory subunits KCNIP2, KCNIP3 and KCNIP4. Interacts with the regulatory subunit KCNIP1; this interaction mediates the capture of both the N- and C-terminus of KCND2, preventing N-type inactivation and stabilizing the S6 conformation, thereby accelerating closed state inactivation and recovery. In vivo, probably exists as heteromeric complex containing variable proportions of KCND1, KCND2, KCND3, KCNIP1, KCNIP2, KCNIP3, KCNIP4, DPP6 and DPP10. The tetrameric channel can associate with up to four regulatory subunits, such as KCNIP2 or KCNIP4. Interaction with four KCNIP4 chains does not reduce interaction with DPP10. Interacts with DLG4 and NCS1/FREQ. Interacts with DLG1. Probably part of a complex consisting of KCNIP1, KCNIP2 isoform 3 and KCND2. Interacts with FLNA, FLNC and DPP10. Interacts (via S1 and S2 helices) with DPP6; this interaction stabilizes the conformation of the S1-S2 helices and facilitates S4 conformational change, including S4 sliding up and down, thereby accelerating activation, inactivation, and recovery. In terms of processing, phosphorylation at Ser-438 in response to MAPK activation is increased in stimulated dendrites. Interaction with KCNIP2 and DPP6 propomtes phosphorylation by PKA at Ser-552. Phosphorylation at Ser-552 has no effect on interaction with KCNIP3, but is required for the regulation of channel activity by KCNIP3. Phosphorylation at Ser-552 leads to KCND2 internalization. Phosphorylated by MAPK in response to signaling via the metabotropic glutamate receptor GRM5. Phosphorylation at Ser-616 is required for the down-regulation of neuronal A-type currents in response to signaling via GRM5. As to expression, detected in ovary, in corpus luteum and in granulosa and theca cells in the follicle (at protein level). Highly expressed throughout the brain. Detected in amygdala, caudate nucleus, cerebellum, hippocampus, substantia nigra and thalamus. Expression is not detectable or very low in heart, kidney, liver, lung, pancreas and skeletal muscle. Not detectable in human heart atrium.

The protein resides in the cell membrane. It is found in the cell projection. Its subcellular location is the dendrite. The protein localises to the synapse. It localises to the perikaryon. The protein resides in the postsynaptic cell membrane. It is found in the dendritic spine. Its subcellular location is the cell junction. It catalyses the reaction K(+)(in) = K(+)(out). In terms of biological role, voltage-gated potassium channel that mediates transmembrane potassium transport in excitable membranes, primarily in the brain. Mediates the major part of the dendritic A-type current I(SA) in brain neurons. This current is activated at membrane potentials that are below the threshold for action potentials. It regulates neuronal excitability, prolongs the latency before the first spike in a series of action potentials, regulates the frequency of repetitive action potential firing, shortens the duration of action potentials and regulates the back-propagation of action potentials from the neuronal cell body to the dendrites. Contributes to the regulation of the circadian rhythm of action potential firing in suprachiasmatic nucleus neurons, which regulates the circadian rhythm of locomotor activity. Functions downstream of the metabotropic glutamate receptor GRM5 and plays a role in neuronal excitability and in nociception mediated by activation of GRM5. Mediates the transient outward current I(to) in rodent heart left ventricle apex cells, but not in human heart, where this current is mediated by another family member. Forms tetrameric potassium-selective channels through which potassium ions pass in accordance with their electrochemical gradient. The channel alternates between opened and closed conformations in response to the voltage difference across the membrane. Can form functional homotetrameric channels and heterotetrameric channels that contain variable proportions of KCND2 and KCND3; channel properties depend on the type of pore-forming alpha subunits that are part of the channel. In vivo, membranes probably contain a mixture of heteromeric potassium channel complexes. Interaction with specific isoforms of the regulatory subunits KCNIP1, KCNIP2, KCNIP3 or KCNIP4 strongly increases expression at the cell surface and thereby increases channel activity; it modulates the kinetics of channel activation and inactivation, shifts the threshold for channel activation to more negative voltage values, shifts the threshold for inactivation to less negative voltages and accelerates recovery after inactivation. Likewise, interaction with DPP6 or DPP10 promotes expression at the cell membrane and regulates both channel characteristics and activity. Upon depolarization, the channel goes from a resting closed state (C state) to an activated but non-conducting state (C* state), from there, the channel may either inactivate (I state) or open (O state). This is A-type voltage-gated potassium channel KCND2 from Homo sapiens (Human).